The following is a 514-amino-acid chain: ATP synthase subunit alpha (514 aa).

170–177 (GDRQIGKT) serves as a coordination point for ATP.

It belongs to the ATPase alpha/beta chains family. In terms of assembly, F-type ATPases have 2 components, CF(1) - the catalytic core - and CF(0) - the membrane proton channel. CF(1) has five subunits: alpha(3), beta(3), gamma(1), delta(1), epsilon(1). CF(0) has three main subunits: a(1), b(2) and c(9-12). The alpha and beta chains form an alternating ring which encloses part of the gamma chain. CF(1) is attached to CF(0) by a central stalk formed by the gamma and epsilon chains, while a peripheral stalk is formed by the delta and b chains.

It is found in the cell inner membrane. The catalysed reaction is ATP + H2O + 4 H(+)(in) = ADP + phosphate + 5 H(+)(out). In terms of biological role, produces ATP from ADP in the presence of a proton gradient across the membrane. The alpha chain is a regulatory subunit. The sequence is that of ATP synthase subunit alpha from Pseudomonas syringae pv. tomato (strain ATCC BAA-871 / DC3000).